Here is a 479-residue protein sequence, read N- to C-terminus: Ribosomal RNA small subunit methyltransferase F (479 aa).

S-adenosyl-L-methionine contacts are provided by residues 125–131, Glu-149, Asp-176, and Asp-194; that span reads AAAPGSK. Cys-247 serves as the catalytic Nucleophile.

Belongs to the class I-like SAM-binding methyltransferase superfamily. RsmB/NOP family.

The protein localises to the cytoplasm. The catalysed reaction is cytidine(1407) in 16S rRNA + S-adenosyl-L-methionine = 5-methylcytidine(1407) in 16S rRNA + S-adenosyl-L-homocysteine + H(+). Functionally, specifically methylates the cytosine at position 1407 (m5C1407) of 16S rRNA. This Escherichia coli O127:H6 (strain E2348/69 / EPEC) protein is Ribosomal RNA small subunit methyltransferase F.